Here is a 553-residue protein sequence, read N- to C-terminus: 3-amino-2-hydroxy-4-methoxybenzoate diazotase (553 aa).

Residues 157–167 (ALPAAGATGPA) show a composition bias toward low complexity. The interval 157 to 178 (ALPAAGATGPAREGDAPPPAPV) is disordered.

This sequence belongs to the ATP-dependent AMP-binding enzyme family.

The enzyme catalyses 3-amino-2-hydroxy-4-methoxybenzoate + nitrite + ATP = cremeomycin + AMP + diphosphate + H2O. It functions in the pathway antibiotic biosynthesis. Its function is as follows. Part of a gene cluster involved in the biosynthesis of cremeomycin, a light-sensitive o-diazoquinone with antibacterial and antiproliferative effects. Catalyzes the last step of cremeomycin biosynthesis, the diazotization of 3-amino-2-hydroxy-4-methoxybenzoate (3,2,4-AHMBA) with nitrite to generate cremeomycin. The chain is 3-amino-2-hydroxy-4-methoxybenzoate diazotase from Streptomyces cremeus.